The chain runs to 1104 residues: tRNA ligase 1 (1104 aa).

The active-site N6-AMP-lysine intermediate is the Lys152.

It belongs to the TRL1 family. Mg(2+) is required as a cofactor. As to expression, mainly expressed in proliferating cells and tissues such as root meristems, the vasculature of developing plantlets, flowers and elongating tissue.

It localises to the nucleus. The protein resides in the cytoplasm. It carries out the reaction ATP + (ribonucleotide)n-3'-hydroxyl + 5'-phospho-(ribonucleotide)m = (ribonucleotide)n+m + AMP + diphosphate.. Requires the presence of NTP, preferentially ATP rather than dATP, UTP, CTP and GTP, respectively, to mediate ribonucleotide 5'-phosphorylation. Functionally, essential component of stress-response pathways entailing repair of RNA breaks with 2',3'-cyclic phosphate and 5'-OH ends. Tri-functional enzyme that repairs RNA breaks with 2',3'-cyclic-PO(4) and 5'-OH ends. The ligation activity requires three sequential enzymatic activities: opening of the 2'3'-cyclic phosphodiester bond of the 5' half-tRNA leaving a 2'-phosphomonoester (CPDase activity), phosphorylation of the 5' terminus of the 3' half-tRNA in the presence of ATP (kinase activity) and ligation of the two tRNA halves in an ATP-dependent reaction (ligase activity). Deficient in transferring AMP to pRNA(OH) to form AppRNA(OH) but proficient at sealing pre-adenylylated AppRNA(OH). CPDase and kinase reactions are almost insensitive to RNA length, whereas the ligase activity decreases with shorter RNA size. Can also splice DNA ended by a single 3'-terminal ribonucleoside 2',3'-cyclic-PO(4). Binds to mRNA, mature and immature. Exhibits tRNA ligase activity in vitro. Required for the splicing of precursor tRNA molecules containing introns. Can circularize an intron cleaved from a pre-tRNA by splicing endonuclease in vitro. Seems not involved in unfolded protein response (UPR) in the endoplasmic reticulum. Involved in auxin signaling and polar transport during organ morphogenesis. In Arabidopsis thaliana (Mouse-ear cress), this protein is tRNA ligase 1.